We begin with the raw amino-acid sequence, 377 residues long: EPS I polysaccharide export outer membrane protein EpsA (377 aa).

The N-terminal stretch at 1-23 is a signal peptide; it reads MFVSIPSIRKTVMSLCAVPLMAA. C24 is lipidated: N-palmitoyl cysteine. C24 is lipidated: S-diacylglycerol cysteine.

Belongs to the BexD/CtrA/VexA family.

The protein resides in the cell outer membrane. Functionally, probably involved in polymerization and/or export of exopolysaccharide EPS I which functions as a virulence factor. The sequence is that of EPS I polysaccharide export outer membrane protein EpsA (epsA) from Ralstonia solanacearum (Pseudomonas solanacearum).